Here is a 207-residue protein sequence, read N- to C-terminus: Ribosome maturation factor RimM (207 aa).

Positions 114–207 constitute a PRC barrel domain; it reads DDEYYWVDLI…RIDSDWPLDY (94 aa).

Belongs to the RimM family. In terms of assembly, binds ribosomal protein uS19.

It localises to the cytoplasm. Functionally, an accessory protein needed during the final step in the assembly of 30S ribosomal subunit, possibly for assembly of the head region. Essential for efficient processing of 16S rRNA. May be needed both before and after RbfA during the maturation of 16S rRNA. It has affinity for free ribosomal 30S subunits but not for 70S ribosomes. This Bordetella bronchiseptica (strain ATCC BAA-588 / NCTC 13252 / RB50) (Alcaligenes bronchisepticus) protein is Ribosome maturation factor RimM.